The primary structure comprises 252 residues: UPF0714 protein YndL (252 aa).

Residues isoleucine 33–alanine 51 traverse the membrane as a helical segment.

Belongs to the UPF0714 family.

Its subcellular location is the cell membrane. This Bacillus subtilis (strain 168) protein is UPF0714 protein YndL (yndL).